A 315-amino-acid polypeptide reads, in one-letter code: Ester hydrolase C11orf54 (315 aa).

The Zn(2+) site is built by His266, His268, and His278.

Monomer. Requires Zn(2+) as cofactor.

It localises to the nucleus. Its subcellular location is the cytoplasm. Exhibits ester hydrolase activity on the substrate p-nitrophenyl acetate, in vitro. Regulates DNA damage and repair by regulating HIF1A degradation via chaperone-mediated autophagy (CMA). Functionally, probably non-functional. The polypeptide is Ester hydrolase C11orf54 (C11orf54) (Homo sapiens (Human)).